The following is a 318-amino-acid chain: Methionyl-tRNA formyltransferase (318 aa).

112–115 (SLLP) is a (6S)-5,6,7,8-tetrahydrofolate binding site.

It belongs to the Fmt family.

The enzyme catalyses L-methionyl-tRNA(fMet) + (6R)-10-formyltetrahydrofolate = N-formyl-L-methionyl-tRNA(fMet) + (6S)-5,6,7,8-tetrahydrofolate + H(+). Functionally, attaches a formyl group to the free amino group of methionyl-tRNA(fMet). The formyl group appears to play a dual role in the initiator identity of N-formylmethionyl-tRNA by promoting its recognition by IF2 and preventing the misappropriation of this tRNA by the elongation apparatus. This Mycobacterium leprae (strain Br4923) protein is Methionyl-tRNA formyltransferase.